The sequence spans 187 residues: MEVFMVSFTLLLGESTFSLGEGFGINTNVFETNIINLSVVLGLVFTLGRNFLISLLDARKETILRNFREADQRAKDAEARLNLAKTELELAEKSAMEIKKQSVLSAELEKKNKNTKIEADTARFKQTQQETLTVQRQRAISKISKQVVNSAITQVKQKLKSSLDSRVQTVINNYKIHKFIEYKPPGN.

The helical transmembrane segment at Ile-34 to Leu-56 threads the bilayer.

The protein belongs to the ATPase B chain family. As to quaternary structure, F-type ATPases have 2 components, F(1) - the catalytic core - and F(0) - the membrane proton channel. F(1) has five subunits: alpha(3), beta(3), gamma(1), delta(1), epsilon(1). F(0) has four main subunits: a(1), b(1), b'(1) and c(10-14). The alpha and beta chains form an alternating ring which encloses part of the gamma chain. F(1) is attached to F(0) by a central stalk formed by the gamma and epsilon chains, while a peripheral stalk is formed by the delta, b and b' chains.

The protein localises to the plastid. It is found in the chloroplast thylakoid membrane. F(1)F(0) ATP synthase produces ATP from ADP in the presence of a proton or sodium gradient. F-type ATPases consist of two structural domains, F(1) containing the extramembraneous catalytic core and F(0) containing the membrane proton channel, linked together by a central stalk and a peripheral stalk. During catalysis, ATP synthesis in the catalytic domain of F(1) is coupled via a rotary mechanism of the central stalk subunits to proton translocation. Its function is as follows. Component of the F(0) channel, it forms part of the peripheral stalk, linking F(1) to F(0). This is ATP synthase subunit b, chloroplastic from Pleurastrum terricola (Filamentous green alga).